Here is a 293-residue protein sequence, read N- to C-terminus: MSTTTTTLHTTTGTVYVADGTTDGKIGYYNHTDDSTNVIRKPIPIQVEDARTLSKSPTTKEEGYQLVDFHTKLPEGHFLDSKSPENKKVIEQVYFDECRRLVQEVTGAAEAYPYVYRVRNQEQNAKASNKSNFHTDFVPVVHVDRDDITAPQRLRASLGAEKAEMLLSKYKSYGSINVWRPVKNVVQKWPLMLVDHKSIENWDYSTHMFTLHSSNDERVATRGAKDHETILTHDKRYRYIYASDMTPDEAWLFFAFHSDPALGIPHGAFWDDSTKEEALTRCSIEVRIWVFFD.

Belongs to the asaB hydroxylase/desaturase family.

The protein operates within secondary metabolite biosynthesis. Its function is as follows. Oxidoreductase; part of the gene cluster that mediates the biosynthesis of squalestatin S1 (SQS1, also known as zaragozic acid A), a heavily oxidized fungal polyketide that offers potent cholesterol lowering activity by targeting squalene synthase (SS). SQS1 is composed of a 2,8-dioxobicyclic[3.2.1]octane-3,4,5-tricarboxyclic acid core that is connected to two lipophilic polyketide arms. These initial steps feature the priming of an unusual benzoic acid starter unit onto the highly reducing polyketide synthase clz14, followed by oxaloacetate extension and product release to generate a tricarboxylic acid containing product. The phenylalanine ammonia lyase (PAL) clz10 and the acyl-CoA ligase clz12 are involved in transforming phenylalanine into benzoyl-CoA. The citrate synthase-like protein clz17 is involved in connecting the C-alpha-carbons of the hexaketide chain and oxaloacetate to afford the tricarboxylic acid unit. The potential hydrolytic enzymes, clz11 and clz13, are in close proximity to pks2 and may participate in product release. On the other side, the tetraketide arm is synthesized by a the squalestatin tetraketide synthase clz2 and enzymatically esterified to the core in the last biosynthetic step, by the acetyltransferase clz6. The biosynthesis of the tetraketide must involve 3 rounds of chain extension. After the first and second rounds methyl-transfer occurs, and in all rounds of extension the ketoreductase and dehydratase are active. The enoyl reductase and C-MeT of clz2 are not active in the final round of extension. The acetyltransferase clz6 appears to have a broad substrate selectivity for its acyl CoA substrate, allowing the in vitro synthesis of novel squalestatins. The biosynthesis of SQS1 requires several oxidative steps likely performed by oxidoreductases clz3, clz15 and clz16. Finally, in support of the identification of the cluster as being responsible for SQS1 production, the cluster contains a gene encoding a putative squalene synthase (SS) clz20, suggesting a likely mechanism for self-resistance. This is Oxidoreductase clz16 from Cochliobolus lunatus (Filamentous fungus).